A 173-amino-acid polypeptide reads, in one-letter code: Probable WRKY transcription factor 50 (173 aa).

The segment at residues 107–172 (SEVEVLDDGF…YEGSHNHSSM (66 aa)) is a DNA-binding region (WRKY).

This sequence belongs to the WRKY group II-c family.

The protein localises to the nucleus. Functionally, transcription factor. Interacts specifically with the W box (5'-(T)TGAC[CT]-3'), a frequently occurring elicitor-responsive cis-acting element. The sequence is that of Probable WRKY transcription factor 50 (WRKY50) from Arabidopsis thaliana (Mouse-ear cress).